Reading from the N-terminus, the 729-residue chain is Probable pre-mRNA-splicing factor ATP-dependent RNA helicase DEAH3 (729 aa).

In terms of domain architecture, Helicase ATP-binding spans 75–244 (LNTLNSNQTL…FSGAPLMKVP (170 aa)). Residue 88-95 (GETGSGKT) coordinates ATP. The short motif at 191–194 (DEAH) is the DEAH box element. The Helicase C-terminal domain maps to 269–449 (TVVQIHMCEP…NTVLTLKKLG (181 aa)).

Belongs to the DEAD box helicase family. DEAH subfamily. PRP43 sub-subfamily.

It catalyses the reaction ATP + H2O = ADP + phosphate + H(+). Its function is as follows. May be involved in pre-mRNA splicing. This is Probable pre-mRNA-splicing factor ATP-dependent RNA helicase DEAH3 from Arabidopsis thaliana (Mouse-ear cress).